A 239-amino-acid chain; its full sequence is Ribonuclease PH (239 aa).

Phosphate is bound by residues Arg86 and 124 to 126 (GTR).

Belongs to the RNase PH family. As to quaternary structure, homohexameric ring arranged as a trimer of dimers.

The catalysed reaction is tRNA(n+1) + phosphate = tRNA(n) + a ribonucleoside 5'-diphosphate. In terms of biological role, phosphorolytic 3'-5' exoribonuclease that plays an important role in tRNA 3'-end maturation. Removes nucleotide residues following the 3'-CCA terminus of tRNAs; can also add nucleotides to the ends of RNA molecules by using nucleoside diphosphates as substrates, but this may not be physiologically important. Probably plays a role in initiation of 16S rRNA degradation (leading to ribosome degradation) during starvation. This chain is Ribonuclease PH, found in Anaeromyxobacter dehalogenans (strain 2CP-1 / ATCC BAA-258).